A 424-amino-acid polypeptide reads, in one-letter code: Zinc finger protein 597 (424 aa).

In terms of domain architecture, KRAB spans Ile14–Pro88. 4 consecutive C2H2-type zinc fingers follow at residues Tyr156–His178, His184–His206, Tyr212–His234, and Tyr240–His262. Lys300 is covalently cross-linked (Glycyl lysine isopeptide (Lys-Gly) (interchain with G-Cter in SUMO2)). C2H2-type zinc fingers lie at residues Leu341–His363, His369–His391, and Phe397–His419.

The protein belongs to the krueppel C2H2-type zinc-finger protein family.

It is found in the nucleus. Functionally, may be involved in transcriptional regulation. The sequence is that of Zinc finger protein 597 (ZNF597) from Homo sapiens (Human).